Consider the following 342-residue polypeptide: Cilia- and flagella-associated protein 36 (342 aa).

A phosphoserine mark is found at S85 and S147. Residues 150-187 (EHEEMKILREVLRKSKEEYDQEEERKRKKQLSEAKTEE) are a coiled coil. The interval 166 to 194 (EEYDQEEERKRKKQLSEAKTEEPTVHSSE) is disordered. Residues 179–189 (QLSEAKTEEPT) are compositionally biased toward basic and acidic residues. S201 bears the Phosphoserine mark. Disordered regions lie at residues 229–250 (RKVE…PGLE) and 282–322 (KLMS…AEEK). Composition is skewed to basic and acidic residues over residues 282-292 (KLMSMRKDMRT) and 300-322 (QKGK…AEEK).

This sequence belongs to the CFAP36 family. As to quaternary structure, interacts with ARL3. In terms of tissue distribution, expressed in several human tissues including brain, testis, heart, lung, pancreas and spleen (at protein level).

The protein localises to the nucleus. The protein resides in the cytoplasm. It is found in the cell projection. It localises to the cilium. Its subcellular location is the flagellum. May act as an effector for ARL3. This chain is Cilia- and flagella-associated protein 36 (CFAP36), found in Homo sapiens (Human).